Reading from the N-terminus, the 118-residue chain is Ribonuclease P protein component (118 aa).

This sequence belongs to the RnpA family. Consists of a catalytic RNA component (M1 or rnpB) and a protein subunit.

The catalysed reaction is Endonucleolytic cleavage of RNA, removing 5'-extranucleotides from tRNA precursor.. Functionally, RNaseP catalyzes the removal of the 5'-leader sequence from pre-tRNA to produce the mature 5'-terminus. It can also cleave other RNA substrates such as 4.5S RNA. The protein component plays an auxiliary but essential role in vivo by binding to the 5'-leader sequence and broadening the substrate specificity of the ribozyme. This Rickettsia canadensis (strain McKiel) protein is Ribonuclease P protein component.